The chain runs to 150 residues: Large ribosomal subunit protein bL9 (150 aa).

The protein belongs to the bacterial ribosomal protein bL9 family.

In terms of biological role, binds to the 23S rRNA. The sequence is that of Large ribosomal subunit protein bL9 from Wolinella succinogenes (strain ATCC 29543 / DSM 1740 / CCUG 13145 / JCM 31913 / LMG 7466 / NCTC 11488 / FDC 602W) (Vibrio succinogenes).